A 352-amino-acid chain; its full sequence is DNA polymerase IV (352 aa).

The UmuC domain occupies 3 to 187 (VLFVDFDYFY…LDIADVPGIG (185 aa)). Residues Asp-7 and Asp-105 each coordinate Mg(2+). Glu-106 is a catalytic residue.

Belongs to the DNA polymerase type-Y family. Monomer. Interacts with the PCNA heterotrimer via PCNA1. Mg(2+) is required as a cofactor.

The protein resides in the cytoplasm. It catalyses the reaction DNA(n) + a 2'-deoxyribonucleoside 5'-triphosphate = DNA(n+1) + diphosphate. Functionally, poorly processive, error-prone DNA polymerase involved in untargeted mutagenesis. Copies undamaged DNA at stalled replication forks, which arise in vivo from mismatched or misaligned primer ends. These misaligned primers can be extended by PolIV. Exhibits no 3'-5' exonuclease (proofreading) activity. It is involved in translesional synthesis. This Saccharolobus solfataricus (strain ATCC 35092 / DSM 1617 / JCM 11322 / P2) (Sulfolobus solfataricus) protein is DNA polymerase IV (dbh).